A 478-amino-acid polypeptide reads, in one-letter code: Ribosomal RNA small subunit methyltransferase F (478 aa).

Residues 126 to 132 (AAAPGSK), E150, D177, and D195 contribute to the S-adenosyl-L-methionine site. The Nucleophile role is filled by C248.

This sequence belongs to the class I-like SAM-binding methyltransferase superfamily. RsmB/NOP family.

The protein localises to the cytoplasm. It carries out the reaction cytidine(1407) in 16S rRNA + S-adenosyl-L-methionine = 5-methylcytidine(1407) in 16S rRNA + S-adenosyl-L-homocysteine + H(+). Its function is as follows. Specifically methylates the cytosine at position 1407 (m5C1407) of 16S rRNA. The protein is Ribosomal RNA small subunit methyltransferase F of Erwinia tasmaniensis (strain DSM 17950 / CFBP 7177 / CIP 109463 / NCPPB 4357 / Et1/99).